The primary structure comprises 106 residues: uncharacterized protein (106 aa).

Belongs to the HesB/IscA family.

This is an uncharacterized protein from Bradyrhizobium diazoefficiens (strain JCM 10833 / BCRC 13528 / IAM 13628 / NBRC 14792 / USDA 110).